A 755-amino-acid polypeptide reads, in one-letter code: MVSHGSSPSLLEALSSDFLACKICLEQLRAPKTLPCLHTYCQDCLAQLADGGRVRCPECRETVPVPPEGVASFKTNFFVNGLLDLVKARACGDLRAGKPACALCPLVGGTSTGGPATARCLDCADDLCQACADGHRCTRQTHTHRVVDLVGYRAGWYDEEARERQAAQCPQHPGEALRFLCQPCSQLLCRECRLDPHLDHPCLPLAEAVRARRPGLEGLLAGVDNNLVELEAARRVEKEALARLREQAARVGTQVEEAAEGVLRALLAQKQEVLGQLRAHVEAAEEAARERLAELEGREQVARAAAAFARRVLSLGREAEILSLEGAIAQRLRQLQGCPWAPGPAPCLLPQLELHPGLLDKNCHLLRLSFEEQQPQKDGGKDGAGTQGGEESQSRREDEPKTERQGGVQPQAGDGAQTPKEEKAQTTREEGAQTLEEDRAQTPHEDGGPQPHRGGRPNKKKKFKGRLKSISREPSPALGPNLDGSGLLPRPIFYCSFPTRMPGDKRSPRITGLCPFGPREILVADEQNRALKRFSLNGDYKGTVPVPEGCSPCSVAALQSAVAFSASARLYLINPNGEVQWRRALSLSQASHAVAALPSGDRVAVSVAGHVEVYNMEGSLATRFIPGGKASRGLRALVFLTTSPQGHFVGSDWQQNSVVICDGLGQVVGEYKGPGLHGCQPGSVSVDKKGYIFLTLREVNKVVILDPKGSLLGDFLTAYHGLEKPRVTTMVDGRYLVVSLSNGTIHIFRVRSPDS.

The segment at 21 to 60 (CKICLEQLRAPKTLPCLHTYCQDCLAQLADGGRVRCPECR) adopts an RING-type zinc-finger fold. 2 B box-type zinc fingers span residues 98 to 149 (KPAC…VVDL) and 164 to 205 (RQAA…CLPL). Positions 169, 172, 192, and 197 each coordinate Zn(2+). Residues 216–314 (LEGLLAGVDN…AAAFARRVLS (99 aa)) adopt a coiled-coil conformation. The segment at 371-484 (EEQQPQKDGG…SPALGPNLDG (114 aa)) is disordered. Positions 392–404 (SQSRREDEPKTER) are enriched in basic and acidic residues. Phosphothreonine occurs at positions 418 and 442. Positions 419-447 (PKEEKAQTTREEGAQTLEEDRAQTPHEDG) are enriched in basic and acidic residues. The span at 453–469 (RGGRPNKKKKFKGRLKS) shows a compositional bias: basic residues. Ser475 is subject to Phosphoserine.

This sequence belongs to the TRIM/RBCC family. In terms of assembly, homooligomer. Interacts with STING1. Interacts with TICAM1. In terms of processing, (Microbial infection) Preferentially ubiquitinated with 'Lys-48' and 'Lys-11'-linked ubiquitin chains by Salmonella effector SopA leading to proteasomal targeting and degradation. Post-translationally, autoubiquitinated. As to expression, widely expressed (at protein level).

It is found in the cytoplasm. The catalysed reaction is S-ubiquitinyl-[E2 ubiquitin-conjugating enzyme]-L-cysteine + [acceptor protein]-L-lysine = [E2 ubiquitin-conjugating enzyme]-L-cysteine + N(6)-ubiquitinyl-[acceptor protein]-L-lysine.. Its pathway is protein modification; protein ubiquitination. Functionally, E3 ubiquitin-protein ligase that plays a key role in innate antiviral immunity by mediating ubiquitination of CGAS and STING1. In response to pathogen- and host-derived double-stranded DNA (dsDNA), targets STING1 to 'Lys-63'-linked ubiquitination, thereby promoting its homodimerization, a step required for the production of type I interferon IFN-beta. Also mediate monoubiquitination of CGAS, thereby promoting CGAS oligomerization and subsequent activation. Promotes also TNFalpha-induced NF-kappa-B signaling by mediating 'Lys-63'-linked ubiquitination TAK1, leading to enhanced interaction between TAK1 and CHUK/IKKalpha. Independently of its E3 ubiquitin ligase activity, positive regulator of TLR3 signaling. Potentiates extracellular double stranded RNA (dsRNA)-induced expression of IFNB1 and interferon-stimulated genes ISG15, IFIT1/ISG56, CXCL10, OASL and CCL5/RANTES. Promotes establishment of an antiviral state by TLR3 ligand and TLR3-mediated chemokine induction following infection by hepatitis C virus. Acts as a restriction factor of Zika virus through direct interaction with the viral RNA via its C-terminal region. This is E3 ubiquitin-protein ligase TRIM56 from Homo sapiens (Human).